Here is a 148-residue protein sequence, read N- to C-terminus: MDVLHAHDLYDEQLIDRVGDAVNEDAGDDLDTLVDGQQQQQRVGFNRQMDILLDAPQEPPLGVFPAQGGPNGPPRLRKKRSFYTMTKPTPPCQSQEPEMCLLMASVTRAMRHVREDQRGEYFANYLVENMTSQNYPNGVGLPQHWGQL.

The disordered stretch occupies residues 56–78 (PQEPPLGVFPAQGGPNGPPRLRK). N-linked (GlcNAc...) asparagine glycosylation occurs at Asn-129.

This sequence belongs to the male-specific scotti family.

Post-meiotically transcribed gene that has a role in late spermiogenesis; required for actin cone progression during spermatid individualization. This is Male-specific protein scotti from Drosophila sechellia (Fruit fly).